The sequence spans 257 residues: Capsid protein (257 aa).

The short motif at 3–20 (KRNYDTAFSTPMSNVRRR) is the Bipartite nuclear localization signal element. The Nuclear localization signal motif lies at 41-55 (KRRRWTNRPMWRKPR). The segment at 69–86 (CEGPCKVQSFEAKHDISH) is a zinc-finger region. The Nuclear export signal signature appears at 102–123 (ITHRVGKRFCVKSIWVTGKIWM). The Bipartite nuclear localization signal signature appears at 201–248 (SKFYRVNNYVVYNHQEAAKYENHTENALLLYMACTHASNPVYATLKIR).

Belongs to the geminiviridae capsid protein family. In terms of assembly, homomultimer. Binds to single-stranded and double-stranded viral DNA. Interacts (via nuclear localization signals) with host importin alpha-1a.

The protein resides in the virion. It is found in the host nucleus. In terms of biological role, encapsidates the viral DNA into characteristic twinned ('geminate') particles. Binds the genomic viral ssDNA and shuttles it into and out of the cell nucleus. The CP of bipartite geminiviruses is not required for cell-to-cell or systemic movement. This Glycine max (Soybean) protein is Capsid protein.